A 301-amino-acid chain; its full sequence is Ribosomal protein L11 methyltransferase (301 aa).

S-adenosyl-L-methionine is bound by residues Thr130, Gly151, Asp172, and Asn239.

Belongs to the methyltransferase superfamily. PrmA family.

Its subcellular location is the cytoplasm. It catalyses the reaction L-lysyl-[protein] + 3 S-adenosyl-L-methionine = N(6),N(6),N(6)-trimethyl-L-lysyl-[protein] + 3 S-adenosyl-L-homocysteine + 3 H(+). Functionally, methylates ribosomal protein L11. This Campylobacter hominis (strain ATCC BAA-381 / DSM 21671 / CCUG 45161 / LMG 19568 / NCTC 13146 / CH001A) protein is Ribosomal protein L11 methyltransferase.